A 293-amino-acid chain; its full sequence is Protein transport protein yif1 (293 aa).

At 1–139 (MPPKLYHPQP…PPAEDLNSPD (139 aa)) the chain is on the cytoplasmic side. The helical transmembrane segment at 140-160 (MYIPLMAFTTHILLLCALAGL) threads the bilayer. The Lumenal segment spans residues 161-175 (QDDFQPELFGLRASK). Residues 176–196 (ACAVVLVEFLATRLGCYLLNI) traverse the membrane as a helical segment. Over 197–201 (SSQSQ) the chain is Cytoplasmic. The helical transmembrane segment at 202–222 (VLDLLAFSGYKFVGLILTSLS) threads the bilayer. Residues 223 to 226 (KLFE) are Lumenal-facing. The chain crosses the membrane as a helical span at residues 227-247 (MPWVTRFVFLYMYLATAFFLL). Over 248-271 (RSLKYAVLPESTMAINATITSHQR) the chain is Cytoplasmic. Residues 272–292 (SRRIYFLFFIAASQILFMYVL) form a helical membrane-spanning segment. S293 is a topological domain (lumenal).

Belongs to the YIF1 family. As to quaternary structure, component of the yip1-yif1 complex, composed of at least yif1, yip1 and yos1. The complex interacts with the ER to Golgi SNAREs bos1 and sec22.

The protein localises to the endoplasmic reticulum membrane. It is found in the golgi apparatus membrane. The protein resides in the cytoplasmic vesicle. It localises to the COPII-coated vesicle. Its function is as follows. Required for fusion of ER-derived vesicles with the Golgi during ER-to-Golgi protein transport. May be involved in proper membrane localization of Rab GTPases. This chain is Protein transport protein yif1, found in Schizosaccharomyces pombe (strain 972 / ATCC 24843) (Fission yeast).